A 381-amino-acid polypeptide reads, in one-letter code: Alkanesulfonate monooxygenase (381 aa).

It belongs to the SsuD family. As to quaternary structure, homotetramer.

It catalyses the reaction an alkanesulfonate + FMNH2 + O2 = an aldehyde + FMN + sulfite + H2O + 2 H(+). Functionally, catalyzes the desulfonation of aliphatic sulfonates. This Citrobacter koseri (strain ATCC BAA-895 / CDC 4225-83 / SGSC4696) protein is Alkanesulfonate monooxygenase.